The following is a 120-amino-acid chain: Small ribosomal subunit protein uS13 (120 aa).

Positions 94–120 are disordered; it reads GLPLRGQRTRTNARTRKGPRKAIAGKK.

This sequence belongs to the universal ribosomal protein uS13 family. In terms of assembly, part of the 30S ribosomal subunit. Forms a loose heterodimer with protein S19. Forms two bridges to the 50S subunit in the 70S ribosome.

Its function is as follows. Located at the top of the head of the 30S subunit, it contacts several helices of the 16S rRNA. In the 70S ribosome it contacts the 23S rRNA (bridge B1a) and protein L5 of the 50S subunit (bridge B1b), connecting the 2 subunits; these bridges are implicated in subunit movement. Contacts the tRNAs in the A and P-sites. The sequence is that of Small ribosomal subunit protein uS13 from Aromatoleum aromaticum (strain DSM 19018 / LMG 30748 / EbN1) (Azoarcus sp. (strain EbN1)).